Reading from the N-terminus, the 747-residue chain is Myotubularin-related protein 12 (747 aa).

The span at 1–14 (MLGKGVVGGGGGTK) shows a compositional bias: gly residues. The disordered stretch occupies residues 1–21 (MLGKGVVGGGGGTKGPKPSFV). The Myotubularin phosphatase domain occupies 205-643 (FDTLKDWCWE…PEIKVWAQRY (439 aa)). Positions 449 to 558 (VPVFLLFLDC…KGQRKGMRFK (110 aa)) are interaction with MTM1. S564, S601, and S716 each carry phosphoserine.

Belongs to the protein-tyrosine phosphatase family. Non-receptor class myotubularin subfamily. Heterodimer with lipid phosphatase MTM1. Heterodimer with lipid phosphatase MTMR2.

It is found in the cytoplasm. It localises to the sarcoplasmic reticulum. The protein localises to the myofibril. Its subcellular location is the sarcomere. Its function is as follows. Acts as an adapter for the myotubularin-related phosphatases. Regulates phosphatase MTM1 protein stability and possibly its intracellular location. By stabilizing MTM1 protein levels, required for skeletal muscle maintenance but not for myogenesis. This chain is Myotubularin-related protein 12 (MTMR12), found in Pongo abelii (Sumatran orangutan).